Reading from the N-terminus, the 341-residue chain is Ketol-acid reductoisomerase (NADP(+)) (341 aa).

Residues 1–181 (MARVYREGDI…GCARAGVLET (181 aa)) enclose the KARI N-terminal Rossmann domain. NADP(+) contacts are provided by residues 24–27 (FGSQ), Ser-50, Ser-52, and 82–85 (DERQ). His-107 is an active-site residue. Residue Gly-133 participates in NADP(+) binding. Positions 182–327 (TFAEETETDL…AELRALAAEG (146 aa)) constitute a KARI C-terminal knotted domain. Mg(2+) is bound by residues Asp-190, Glu-194, Glu-226, and Glu-230. Ser-251 serves as a coordination point for substrate.

Belongs to the ketol-acid reductoisomerase family. Mg(2+) is required as a cofactor.

It carries out the reaction (2R)-2,3-dihydroxy-3-methylbutanoate + NADP(+) = (2S)-2-acetolactate + NADPH + H(+). It catalyses the reaction (2R,3R)-2,3-dihydroxy-3-methylpentanoate + NADP(+) = (S)-2-ethyl-2-hydroxy-3-oxobutanoate + NADPH + H(+). The protein operates within amino-acid biosynthesis; L-isoleucine biosynthesis; L-isoleucine from 2-oxobutanoate: step 2/4. Its pathway is amino-acid biosynthesis; L-valine biosynthesis; L-valine from pyruvate: step 2/4. In terms of biological role, involved in the biosynthesis of branched-chain amino acids (BCAA). Catalyzes an alkyl-migration followed by a ketol-acid reduction of (S)-2-acetolactate (S2AL) to yield (R)-2,3-dihydroxy-isovalerate. In the isomerase reaction, S2AL is rearranged via a Mg-dependent methyl migration to produce 3-hydroxy-3-methyl-2-ketobutyrate (HMKB). In the reductase reaction, this 2-ketoacid undergoes a metal-dependent reduction by NADPH to yield (R)-2,3-dihydroxy-isovalerate. This chain is Ketol-acid reductoisomerase (NADP(+)), found in Rubrobacter xylanophilus (strain DSM 9941 / JCM 11954 / NBRC 16129 / PRD-1).